We begin with the raw amino-acid sequence, 700 residues long: Elongation factor G (700 aa).

One can recognise a tr-type G domain in the interval 10–285; it reads DRTRNIGIMA…AVIDYLPSPL (276 aa). Residues 19-26, 83-87, and 137-140 contribute to the GTP site; these read AHIDAGKT, DTPGH, and NKMD.

The protein belongs to the TRAFAC class translation factor GTPase superfamily. Classic translation factor GTPase family. EF-G/EF-2 subfamily.

Its subcellular location is the cytoplasm. Catalyzes the GTP-dependent ribosomal translocation step during translation elongation. During this step, the ribosome changes from the pre-translocational (PRE) to the post-translocational (POST) state as the newly formed A-site-bound peptidyl-tRNA and P-site-bound deacylated tRNA move to the P and E sites, respectively. Catalyzes the coordinated movement of the two tRNA molecules, the mRNA and conformational changes in the ribosome. The chain is Elongation factor G from Lacticaseibacillus paracasei (strain ATCC 334 / BCRC 17002 / CCUG 31169 / CIP 107868 / KCTC 3260 / NRRL B-441) (Lactobacillus paracasei).